The following is a 176-amino-acid chain: ATP-dependent protease subunit HslV (176 aa).

Residue T6 is part of the active site. The Na(+) site is built by G161, C164, and T167.

Belongs to the peptidase T1B family. HslV subfamily. A double ring-shaped homohexamer of HslV is capped on each side by a ring-shaped HslU homohexamer. The assembly of the HslU/HslV complex is dependent on binding of ATP.

It localises to the cytoplasm. The catalysed reaction is ATP-dependent cleavage of peptide bonds with broad specificity.. With respect to regulation, allosterically activated by HslU binding. In terms of biological role, protease subunit of a proteasome-like degradation complex believed to be a general protein degrading machinery. The chain is ATP-dependent protease subunit HslV from Thermotoga sp. (strain RQ2).